We begin with the raw amino-acid sequence, 418 residues long: Gamma-glutamyl phosphate reductase (418 aa).

Belongs to the gamma-glutamyl phosphate reductase family.

It localises to the cytoplasm. It catalyses the reaction L-glutamate 5-semialdehyde + phosphate + NADP(+) = L-glutamyl 5-phosphate + NADPH + H(+). It functions in the pathway amino-acid biosynthesis; L-proline biosynthesis; L-glutamate 5-semialdehyde from L-glutamate: step 2/2. Functionally, catalyzes the NADPH-dependent reduction of L-glutamate 5-phosphate into L-glutamate 5-semialdehyde and phosphate. The product spontaneously undergoes cyclization to form 1-pyrroline-5-carboxylate. The chain is Gamma-glutamyl phosphate reductase from Chlorobium chlorochromatii (strain CaD3).